We begin with the raw amino-acid sequence, 601 residues long: Glutathione-regulated potassium-efflux system protein KefB (601 aa).

A run of 13 helical transmembrane segments spans residues 4–24, 29–49, 55–75, 87–107, 115–135, 152–172, 177–197, 207–227, 230–250, 268–288, 291–311, 324–344, and 356–376; these read SDFLLAGVLFLFAAVAAVPLA, IGAVLGYLLAGIAIGPWGLGF, EILHFSELGVVFLMFIIGLEL, IFGVGAAQVLLSAALLAGLLM, AAVVGGIGLAMSSTAMALQLM, VLLFQDLAVIPALALVPLLAG, HFDWMKIGMKVLAFVGMLIGG, FIAASGVREVFTAATLLLVLG, LFMDALGLSMALGTFIAGVLL, GLLLGLFFISVGMSLNLGVLY, LLWVVISVVVLVAVKILVLYL, MQFAGVLSQGGEFAFVLFSTA, and ALLLVTVTLSMMTTPLLMKLV. The 120-residue stretch at 400 to 519 folds into the RCK N-terminal domain; that stretch reads KPQVIVVGFG…AGVTQFSRET (120 aa).

Belongs to the monovalent cation:proton antiporter 2 (CPA2) transporter (TC 2.A.37) family. KefB subfamily. As to quaternary structure, interacts with the regulatory subunit KefG.

The protein resides in the cell inner membrane. Its function is as follows. Pore-forming subunit of a potassium efflux system that confers protection against electrophiles. Catalyzes K(+)/H(+) antiport. The sequence is that of Glutathione-regulated potassium-efflux system protein KefB from Escherichia coli O139:H28 (strain E24377A / ETEC).